A 328-amino-acid chain; its full sequence is Biotin synthase (328 aa).

Positions 42–267 (YHVQLASLLS…LMPGSRVRLS (226 aa)) constitute a Radical SAM core domain. Positions 57, 61, and 64 each coordinate [4Fe-4S] cluster. [2Fe-2S] cluster-binding residues include cysteine 101, cysteine 133, cysteine 193, and arginine 265.

It belongs to the radical SAM superfamily. Biotin synthase family. As to quaternary structure, homodimer. It depends on [4Fe-4S] cluster as a cofactor. [2Fe-2S] cluster is required as a cofactor.

It carries out the reaction (4R,5S)-dethiobiotin + (sulfur carrier)-SH + 2 reduced [2Fe-2S]-[ferredoxin] + 2 S-adenosyl-L-methionine = (sulfur carrier)-H + biotin + 2 5'-deoxyadenosine + 2 L-methionine + 2 oxidized [2Fe-2S]-[ferredoxin]. Its pathway is cofactor biosynthesis; biotin biosynthesis; biotin from 7,8-diaminononanoate: step 2/2. In terms of biological role, catalyzes the conversion of dethiobiotin (DTB) to biotin by the insertion of a sulfur atom into dethiobiotin via a radical-based mechanism. The sequence is that of Biotin synthase from Synechococcus sp. (strain CC9311).